The sequence spans 320 residues: Homoserine kinase (320 aa).

100 to 110 provides a ligand contact to ATP; sequence PLSSGMGSSAA.

This sequence belongs to the GHMP kinase family. Homoserine kinase subfamily.

It is found in the cytoplasm. It carries out the reaction L-homoserine + ATP = O-phospho-L-homoserine + ADP + H(+). It functions in the pathway amino-acid biosynthesis; L-threonine biosynthesis; L-threonine from L-aspartate: step 4/5. Catalyzes the ATP-dependent phosphorylation of L-homoserine to L-homoserine phosphate. This Chlorobium phaeobacteroides (strain DSM 266 / SMG 266 / 2430) protein is Homoserine kinase.